The following is an 83-amino-acid chain: Large ribosomal subunit protein eL14 (83 aa).

Belongs to the eukaryotic ribosomal protein eL14 family. Part of the 50S ribosomal subunit.

The polypeptide is Large ribosomal subunit protein eL14 (Thermococcus kodakarensis (strain ATCC BAA-918 / JCM 12380 / KOD1) (Pyrococcus kodakaraensis (strain KOD1))).